The following is a 422-amino-acid chain: Electron transfer flavoprotein subunit alpha (422 aa).

The segment at 61–80 is disordered; that stretch reads KRIDRSGTQQGAGGGKASAS. Residues 329-330, 343-347, 360-367, and Asn381 each bind FAD; these read SR, QVGAT, and GISGAIQH.

The protein belongs to the ETF alpha-subunit/FixB family. As to quaternary structure, heterodimer of an alpha and a beta subunit. It depends on FAD as a cofactor.

In terms of biological role, participates in the electron transfer process during N,N-dimethylglycine (DMG) degradation to sarcosine. The sequence is that of Electron transfer flavoprotein subunit alpha from Chromohalobacter salexigens (strain ATCC BAA-138 / DSM 3043 / CIP 106854 / NCIMB 13768 / 1H11).